The primary structure comprises 307 residues: 4-hydroxythreonine-4-phosphate dehydrogenase (307 aa).

Substrate contacts are provided by H126 and T127. A divalent metal cation is bound by residues H156, H195, and H251. Substrate is bound by residues K259, N268, and R277.

Belongs to the PdxA family. As to quaternary structure, homodimer. Requires Zn(2+) as cofactor. The cofactor is Mg(2+). Co(2+) serves as cofactor.

It localises to the cytoplasm. It carries out the reaction 4-(phosphooxy)-L-threonine + NAD(+) = 3-amino-2-oxopropyl phosphate + CO2 + NADH. The protein operates within cofactor biosynthesis; pyridoxine 5'-phosphate biosynthesis; pyridoxine 5'-phosphate from D-erythrose 4-phosphate: step 4/5. Catalyzes the NAD(P)-dependent oxidation of 4-(phosphooxy)-L-threonine (HTP) into 2-amino-3-oxo-4-(phosphooxy)butyric acid which spontaneously decarboxylates to form 3-amino-2-oxopropyl phosphate (AHAP). This Helicobacter pylori (strain ATCC 700392 / 26695) (Campylobacter pylori) protein is 4-hydroxythreonine-4-phosphate dehydrogenase.